A 431-amino-acid polypeptide reads, in one-letter code: Acetylornithine aminotransferase (431 aa).

Residues glycine 118–alanine 119 and phenylalanine 157 contribute to the pyridoxal 5'-phosphate site. Arginine 160 provides a ligand contact to N(2)-acetyl-L-ornithine. Aspartate 251–glutamine 254 is a binding site for pyridoxal 5'-phosphate. Position 284 is an N6-(pyridoxal phosphate)lysine (lysine 284). N(2)-acetyl-L-ornithine is bound at residue serine 313. Threonine 314 is a pyridoxal 5'-phosphate binding site.

Belongs to the class-III pyridoxal-phosphate-dependent aminotransferase family. ArgD subfamily. As to quaternary structure, homodimer. Requires pyridoxal 5'-phosphate as cofactor.

The protein resides in the cytoplasm. It catalyses the reaction N(2)-acetyl-L-ornithine + 2-oxoglutarate = N-acetyl-L-glutamate 5-semialdehyde + L-glutamate. The protein operates within amino-acid biosynthesis; L-arginine biosynthesis; N(2)-acetyl-L-ornithine from L-glutamate: step 4/4. The protein is Acetylornithine aminotransferase of Bifidobacterium longum (strain NCC 2705).